Here is a 915-residue protein sequence, read N- to C-terminus: Pentatricopeptide repeat-containing protein At5g65560 (915 aa).

PPR repeat units follow at residues 182–216 (IIGCYNTLLNSLARFGLVDEMKQVYMEMLEDKVCP), 217–251 (NIYTYNKMVNGYCKLGNVEEANQYVSKIVEAGLDP), 252–286 (DFFTYTSLIMGYCQRKDLDSAFKVFNEMPLKGCRR), 287–321 (NEVAYTHLIHGLCVARRIDEAMDLFVKMKDDECFP), 322–356 (TVRTYTVLIKSLCGSERKSEALNLVKEMEETGIKP), 357–391 (NIHTYTVLIDSLCSQCKFEKARELLGQMLEKGLMP), 392–426 (NVITYNALINGYCKRGMIEDAVDVVELMESRKLSP), 427–460 (NTRTYNELIKGYCKSNVHKAMGVLNKMLERKVLP), 461–495 (DVVTYNSLIDGQCRSGNFDSAYRLLSLMNDRGLVP), 496–530 (DQWTYTSMIDSLCKSKRVEEACDLFDSLEQKGVNP), 531–565 (NVVMYTALIDGYCKAGKVDEAHLMLEKMLSKNCLP), 566–600 (NSLTFNALIHGLCADGKLKEATLLEEKMVKIGLQP), 601–635 (TVSTDTILIHRLLKDGDFDHAYSRFQQMLSSGTKP), 636–670 (DAHTYTTFIQTYCREGRLLDAEDMMAKMRENGVSP), 671–705 (DLFTYSSLIKGYGDLGQTNFAFDVLKRMRDTGCEP), 724–758 (KQKGSEPELCAMSNMMEFDTVVELLEKMVEHSVTP), 759–794 (NAKSYEKLILGICEVGNLRVAEKVFDHMQRNEGISP), 795–829 (SELVFNALLSCCCKLKKHNEAAKVVDDMICVGHLP), 830–864 (QLESCKVLICGLYKKGEKERGTSVFQNLLQCGYYE), and 865–899 (DELAWKIIIDGVGKQGLVEAFYELFNVMEKNGCKF).

This sequence belongs to the PPR family. P subfamily.

This Arabidopsis thaliana (Mouse-ear cress) protein is Pentatricopeptide repeat-containing protein At5g65560.